We begin with the raw amino-acid sequence, 104 residues long: Large ribosomal subunit protein bL21 (104 aa).

Belongs to the bacterial ribosomal protein bL21 family. Part of the 50S ribosomal subunit. Contacts protein L20.

Its function is as follows. This protein binds to 23S rRNA in the presence of protein L20. This is Large ribosomal subunit protein bL21 from Helicobacter pylori (strain HPAG1).